Reading from the N-terminus, the 490-residue chain is ATP synthase subunit beta, chloroplastic (490 aa).

Residue 170-177 (GGAGVGKT) coordinates ATP.

Belongs to the ATPase alpha/beta chains family. As to quaternary structure, F-type ATPases have 2 components, CF(1) - the catalytic core - and CF(0) - the membrane proton channel. CF(1) has five subunits: alpha(3), beta(3), gamma(1), delta(1), epsilon(1). CF(0) has four main subunits: a(1), b(1), b'(1) and c(9-12).

Its subcellular location is the plastid. It localises to the chloroplast thylakoid membrane. The enzyme catalyses ATP + H2O + 4 H(+)(in) = ADP + phosphate + 5 H(+)(out). Its function is as follows. Produces ATP from ADP in the presence of a proton gradient across the membrane. The catalytic sites are hosted primarily by the beta subunits. The protein is ATP synthase subunit beta, chloroplastic of Ipomoea obscura (Obscure morning glory).